Consider the following 361-residue polypeptide: Protein RecA (361 aa).

77–84 contacts ATP; it reads GPESSGKT.

It belongs to the RecA family.

The protein localises to the cytoplasm. Functionally, can catalyze the hydrolysis of ATP in the presence of single-stranded DNA, the ATP-dependent uptake of single-stranded DNA by duplex DNA, and the ATP-dependent hybridization of homologous single-stranded DNAs. It interacts with LexA causing its activation and leading to its autocatalytic cleavage. The protein is Protein RecA of Rhizobium etli.